The primary structure comprises 433 residues: Gamma-glutamyl phosphate reductase (433 aa).

The protein belongs to the gamma-glutamyl phosphate reductase family.

The protein localises to the cytoplasm. It carries out the reaction L-glutamate 5-semialdehyde + phosphate + NADP(+) = L-glutamyl 5-phosphate + NADPH + H(+). It participates in amino-acid biosynthesis; L-proline biosynthesis; L-glutamate 5-semialdehyde from L-glutamate: step 2/2. In terms of biological role, catalyzes the NADPH-dependent reduction of L-glutamate 5-phosphate into L-glutamate 5-semialdehyde and phosphate. The product spontaneously undergoes cyclization to form 1-pyrroline-5-carboxylate. This is Gamma-glutamyl phosphate reductase from Rhodopseudomonas palustris (strain BisB18).